The chain runs to 1360 residues: DNA-directed RNA polymerase subunit beta (1360 aa).

This sequence belongs to the RNA polymerase beta chain family. As to quaternary structure, the RNAP catalytic core consists of 2 alpha, 1 beta, 1 beta' and 1 omega subunit. When a sigma factor is associated with the core the holoenzyme is formed, which can initiate transcription.

The catalysed reaction is RNA(n) + a ribonucleoside 5'-triphosphate = RNA(n+1) + diphosphate. Its function is as follows. DNA-dependent RNA polymerase catalyzes the transcription of DNA into RNA using the four ribonucleoside triphosphates as substrates. This chain is DNA-directed RNA polymerase subunit beta, found in Vesicomyosocius okutanii subsp. Calyptogena okutanii (strain HA).